The primary structure comprises 101 residues: Urease subunit beta (101 aa).

This sequence belongs to the urease beta subunit family. In terms of assembly, heterotrimer of UreA (gamma), UreB (beta) and UreC (alpha) subunits. Three heterotrimers associate to form the active enzyme.

It is found in the cytoplasm. It carries out the reaction urea + 2 H2O + H(+) = hydrogencarbonate + 2 NH4(+). The protein operates within nitrogen metabolism; urea degradation; CO(2) and NH(3) from urea (urease route): step 1/1. The polypeptide is Urease subunit beta (Azotobacter vinelandii (strain DJ / ATCC BAA-1303)).